We begin with the raw amino-acid sequence, 468 residues long: 6-phosphogluconate dehydrogenase, decarboxylating (468 aa).

Residues 10-15 (GMAVMG), 33-35 (NRS), 74-76 (VKA), and asparagine 102 each bind NADP(+). Substrate contacts are provided by residues asparagine 102 and 128–130 (SGG). Lysine 183 acts as the Proton acceptor in catalysis. 186 to 187 (HN) is a binding site for substrate. Glutamate 190 acts as the Proton donor in catalysis. Residues tyrosine 191, lysine 260, arginine 287, arginine 445, and histidine 451 each coordinate substrate.

Belongs to the 6-phosphogluconate dehydrogenase family. Homodimer.

It catalyses the reaction 6-phospho-D-gluconate + NADP(+) = D-ribulose 5-phosphate + CO2 + NADPH. The protein operates within carbohydrate degradation; pentose phosphate pathway; D-ribulose 5-phosphate from D-glucose 6-phosphate (oxidative stage): step 3/3. Catalyzes the oxidative decarboxylation of 6-phosphogluconate to ribulose 5-phosphate and CO(2), with concomitant reduction of NADP to NADPH. The protein is 6-phosphogluconate dehydrogenase, decarboxylating (gnd) of Escherichia coli.